A 167-amino-acid chain; its full sequence is uncharacterized protein (167 aa).

It to A.thaliana At2g20940.

This is an uncharacterized protein from Schizosaccharomyces pombe (strain 972 / ATCC 24843) (Fission yeast).